The sequence spans 510 residues: 2,3-bisphosphoglycerate-independent phosphoglycerate mutase (510 aa).

Mn(2+) contacts are provided by Asp15 and Ser65. The active-site Phosphoserine intermediate is the Ser65. Substrate-binding positions include His126, 155-156, Arg187, Arg193, 259-262, and Lys332; these read RD and RPDR. 5 residues coordinate Mn(2+): Asp399, His403, Asp440, His441, and His458.

This sequence belongs to the BPG-independent phosphoglycerate mutase family. Mn(2+) serves as cofactor.

The protein localises to the plastid. Its subcellular location is the chloroplast. It carries out the reaction (2R)-2-phosphoglycerate = (2R)-3-phosphoglycerate. The protein operates within carbohydrate degradation; glycolysis; pyruvate from D-glyceraldehyde 3-phosphate: step 3/5. Its function is as follows. Catalyzes the interconversion of 2-phosphoglycerate and 3-phosphoglycerate. This chain is 2,3-bisphosphoglycerate-independent phosphoglycerate mutase, found in Antithamnion sp. (Red alga).